The chain runs to 429 residues: Glucose-1-phosphate adenylyltransferase (429 aa).

Residues Gly-162, 177-178 (EK), and Ser-209 contribute to the alpha-D-glucose 1-phosphate site.

This sequence belongs to the bacterial/plant glucose-1-phosphate adenylyltransferase family. As to quaternary structure, homotetramer.

The catalysed reaction is alpha-D-glucose 1-phosphate + ATP + H(+) = ADP-alpha-D-glucose + diphosphate. It functions in the pathway glycan biosynthesis; glycogen biosynthesis. In terms of biological role, involved in the biosynthesis of ADP-glucose, a building block required for the elongation reactions to produce glycogen. Catalyzes the reaction between ATP and alpha-D-glucose 1-phosphate (G1P) to produce pyrophosphate and ADP-Glc. This Trichormus variabilis (strain ATCC 29413 / PCC 7937) (Anabaena variabilis) protein is Glucose-1-phosphate adenylyltransferase.